Here is a 914-residue protein sequence, read N- to C-terminus: MRKTETMVQLSPSRTLETLTPSELTVEKDDGQGSPKPESPRMLSALQLALSSTTVYCGYEKYIEDGLICLKHKIRNIEKKKLKLERYSDKLKKGEKLNEDQLEAVGKYDEVVHNLKFAKELQKTIGSLTQDLLKAQRKAVRQEKQMKTDEEKSRLSLMLQVQYVLHSLQREDVRKNFCNTRQYSCYMSTQDMEGLMDLASLVGCKRDYSISLEDQMRRAAIVYWELLEGNEKPVAGSTYKHMKEKLLRLVDSGFFDNIPLPKSDSQEKTETIKPDSQSRPSGLTTLVKLSSNEVPSKEFLNRRYMPETDERRRGETASPRNWKEDFLAMKEREPPDSWEMEELADPPASSQSPIQKPWKGAAGLIPKTVDIVKRSTTDPKEKRQRKKAEQDSKSMPVAVEVFSSPSPLPKDPVQRRQQLETLMDQISGSFSFMQESLLDGESSPVNTQTKRCRPSPGSSTPIVQRELTKSPSDILPSSQRSTPLRILLSGEGKGCLSNGDRSINGSDLELHSEDKPRKQAEGFNSPPLYRRGSSISVSLENQSTVQAGRQMLCNGVSSSGSAQTFSTPPSRRSISAENPFHNIHSVFNVIGESSGMKADESGFSESIHRSFTSAKTSSVTTASTQTPPELNPPEEDLQIEGQYPLECAVSAGGPVFSSSHSRVGQSCYSRGAVRGGYDAYRVNVRSPGGSFMSQTHREPASALYMARENGYQQNFKRGAGTATQRSSAGWSDSSQVSSPDRDGAYPLDSGLSDTLSIPAMEVPMNPQGPHTLMPVHVYPLTQLRVAFSAARTANFAPGTLDQPIAFDLLHTNLGDMFDTGSGRFTCPATGAYVFIFHILKLAISVPLYINLMRNEEVMVSAYANDGAPDHETASNHAVLQLFQGDQVWLRLHRGAIYGSSWKYSTFSGFLLYQD.

Disordered stretches follow at residues 259-283, 298-326, 367-411, 439-480, 495-529, 608-631, and 718-747; these read PLPK…PSGL, EFLN…KEDF, KTVD…LPKD, DGES…SSQR, CLSN…PPLY, HRSF…PELN, and GAGT…AYPL. Over residues 264-273 the composition is skewed to basic and acidic residues; that stretch reads DSQEKTETIK. The segment covering 274–283 has biased composition (polar residues); the sequence is PDSQSRPSGL. Over residues 370-392 the composition is skewed to basic and acidic residues; sequence DIVKRSTTDPKEKRQRKKAEQDS. Residues 469 to 480 show a composition bias toward polar residues; sequence KSPSDILPSSQR. Basic and acidic residues predominate over residues 508–520; sequence LELHSEDKPRKQA. The segment covering 610 to 626 has biased composition (low complexity); that stretch reads SFTSAKTSSVTTASTQT. A compositionally biased stretch (polar residues) spans 718–738; that stretch reads GAGTATQRSSAGWSDSSQVSS. One can recognise a C1q domain in the interval 780–914; sequence LTQLRVAFSA…TFSGFLLYQD (135 aa). 2 residues coordinate Ca(2+): aspartate 865 and glutamate 871.

The protein belongs to the caprin family. In terms of assembly, homotrimer; via C1q domain.

It localises to the cytoplasm. Its subcellular location is the cell membrane. In terms of biological role, promotes phosphorylation of the Wnt coreceptor LRP6, leading to increased activity of the canonical Wnt signaling pathway. Facilitates constitutive LRP6 phosphorylation by CDK14/CCNY during G2/M stage of the cell cycle, which may potentiate cells for Wnt signaling. May regulate the transport and translation of mRNAs, modulating for instance the expression of proteins involved in synaptic plasticity in neurons. Involved in regulation of growth as erythroblasts shift from a highly proliferative state towards their terminal phase of differentiation. May be involved in apoptosis. The sequence is that of Caprin-2 from Danio rerio (Zebrafish).